The following is a 158-amino-acid chain: 3-dehydroquinate dehydratase (158 aa).

Tyrosine 24 functions as the Proton acceptor in the catalytic mechanism. Residues asparagine 75, histidine 81, and aspartate 88 each coordinate substrate. Histidine 101 functions as the Proton donor in the catalytic mechanism. Residues leucine 102–serine 103 and arginine 112 each bind substrate.

Belongs to the type-II 3-dehydroquinase family. As to quaternary structure, homododecamer.

It catalyses the reaction 3-dehydroquinate = 3-dehydroshikimate + H2O. It participates in metabolic intermediate biosynthesis; chorismate biosynthesis; chorismate from D-erythrose 4-phosphate and phosphoenolpyruvate: step 3/7. Catalyzes a trans-dehydration via an enolate intermediate. This Bartonella bacilliformis (strain ATCC 35685 / KC583 / Herrer 020/F12,63) protein is 3-dehydroquinate dehydratase.